Reading from the N-terminus, the 276-residue chain is Large ribosomal subunit protein uL2c (276 aa).

The segment at 225-276 (AMNPVDHPHGGGEGRTPIGRKKPVTPWGYSALGKKSRKRNRYSDASILRRRE) is disordered.

This sequence belongs to the universal ribosomal protein uL2 family. Part of the 50S ribosomal subunit.

Its subcellular location is the plastid. It localises to the chloroplast. The sequence is that of Large ribosomal subunit protein uL2c (rpl2) from Pinus koraiensis (Korean pine).